The chain runs to 231 residues: Ribonuclease 3 (231 aa).

Positions Gln-5–Gly-134 constitute an RNase III domain. Glu-47 is a binding site for Mg(2+). Asp-51 is a catalytic residue. Residues Asn-120 and Glu-123 each coordinate Mg(2+). Glu-123 is an active-site residue. In terms of domain architecture, DRBM spans Asp-160–His-229.

It belongs to the ribonuclease III family. As to quaternary structure, homodimer. Mg(2+) serves as cofactor.

It localises to the cytoplasm. The catalysed reaction is Endonucleolytic cleavage to 5'-phosphomonoester.. In terms of biological role, digests double-stranded RNA. Involved in the processing of primary rRNA transcript to yield the immediate precursors to the large and small rRNAs (23S and 16S). Processes some mRNAs, and tRNAs when they are encoded in the rRNA operon. Processes pre-crRNA and tracrRNA of type II CRISPR loci if present in the organism. In Lactococcus lactis subsp. lactis (strain IL1403) (Streptococcus lactis), this protein is Ribonuclease 3.